The following is a 476-amino-acid chain: Cysteine--tRNA ligase (476 aa).

Cys-36 is a Zn(2+) binding site. A 'HIGH' region motif is present at residues 38–48 (PTVYDYAHIGN). Residues Cys-221, His-246, and Glu-250 each contribute to the Zn(2+) site. The 'KMSKS' region signature appears at 278–282 (KMSKS). Position 281 (Lys-281) interacts with ATP.

It belongs to the class-I aminoacyl-tRNA synthetase family. As to quaternary structure, monomer. It depends on Zn(2+) as a cofactor.

It localises to the cytoplasm. It catalyses the reaction tRNA(Cys) + L-cysteine + ATP = L-cysteinyl-tRNA(Cys) + AMP + diphosphate. The sequence is that of Cysteine--tRNA ligase from Chlamydia caviae (strain ATCC VR-813 / DSM 19441 / 03DC25 / GPIC) (Chlamydophila caviae).